A 380-amino-acid chain; its full sequence is Magnesium-protoporphyrin IX monomethyl ester [oxidative] cyclase 1 (380 aa).

Belongs to the AcsF family. Fe cation is required as a cofactor.

The catalysed reaction is Mg-protoporphyrin IX 13-monomethyl ester + 3 NADPH + 3 O2 + 2 H(+) = 3,8-divinyl protochlorophyllide a + 3 NADP(+) + 5 H2O. It functions in the pathway porphyrin-containing compound metabolism; chlorophyll biosynthesis (light-independent). Functionally, catalyzes the formation of the isocyclic ring in chlorophyll biosynthesis. Mediates the cyclase reaction, which results in the formation of divinylprotochlorophyllide (Pchlide) characteristic of all chlorophylls from magnesium-protoporphyrin IX 13-monomethyl ester (MgPMME). The polypeptide is Magnesium-protoporphyrin IX monomethyl ester [oxidative] cyclase 1 (Thermosynechococcus vestitus (strain NIES-2133 / IAM M-273 / BP-1)).